Consider the following 452-residue polypeptide: MLGPFEVLETIDMIQKENLDIRTITMGISLRDCCHPDIDISCKKIYDKITRYAEKLVVTGENIEREFGIPIINKRISVTPIALIAESSESDEYVKFAEAMDKAAQTVGVDFIGGFSSLVHKGYTVGDKRLIQSIPEALSRTKLVCSSVNVASTKAGINMDAVAEMGRIIKKCAELTADSGALACAKLVVFANAVEDNPFMAGAFHGIGEPECVINVGVSGPGVVKCALEKVKGADFGTVSETIKKTAFKITRMGQLVAQEASRRLNVPFGIVDLSLAPTPAIGDSVAYILEEMGLEKCGTHGTTAALALLNDAVKKGGVMASSYVGGLSGAFIPVSEDAGMIEAAMSGALSLEKLEAMTCVCSVGLDMIVVPGDTSAETISAIIADEAAIGVVNTKTTAVRIIPAPGKKVGDKVEFGGLLGSGPVMKVNPFSSSEFIKRGGRIPAPMHSLKN.

It belongs to the UPF0210 family. In terms of assembly, homodimer.

This is UPF0210 protein Ccel_1722 from Ruminiclostridium cellulolyticum (strain ATCC 35319 / DSM 5812 / JCM 6584 / H10) (Clostridium cellulolyticum).